The following is a 322-amino-acid chain: (12E)-labda-8(17),12,14-triene synthase (322 aa).

Positions 1 to 11 (MNDATRTSTTP) are enriched in polar residues. The disordered stretch occupies residues 1 to 26 (MNDATRTSTTPPALPMPDLRDSFPGP). Mg(2+) contacts are provided by Asp-93 and Glu-98. The DDXXXE motif motif lies at 93-98 (DDAHGE). Arg-188 contributes to the substrate binding site. Residues Asn-234 and Ser-238 each coordinate Mg(2+). The short motif at 234–242 (NDLASYAKE) is the NXXXSXXXE motif element. Lys-241 serves as a coordination point for substrate. Glu-242 lines the Mg(2+) pocket. Substrate is bound at residue 319–320 (RY).

It belongs to the terpene synthase family. It depends on Mg(2+) as a cofactor.

It carries out the reaction (+)-copalyl diphosphate = (12E)-labda-8(17),12,14-triene + diphosphate. Involved in the biosynthesis of the labdane-type bicyclic diterpene labda-8(17),12(E),14-triene. Catalyzes the conversion of (+)-copalyl diphosphate to yield labda-8(17),12(E),14-triene. This Streptomyces anulatus (Streptomyces chrysomallus) protein is (12E)-labda-8(17),12,14-triene synthase.